We begin with the raw amino-acid sequence, 397 residues long: Lysophospholipid transporter LplT (397 aa).

The next 11 membrane-spanning stretches (helical) occupy residues 16–36 (MLAV…LLFA), 53–73 (VLQM…GQFA), 91–111 (LGAG…LVGI), 139–159 (LMES…GILA), 164–184 (LAAL…NLWI), 227–247 (LFWG…PVAL), 253–273 (AMPT…AGAA), 281–301 (TVSR…AFAV), 305–325 (LLPA…FIVP), 352–372 (NVAM…GVPP), and 373–393 (VAVG…LWVW).

This sequence belongs to the major facilitator superfamily. LplT (TC 2.A.1.42) family.

It localises to the cell inner membrane. Functionally, catalyzes the facilitated diffusion of 2-acyl-glycero-3-phosphoethanolamine (2-acyl-GPE) into the cell. This Klebsiella pneumoniae subsp. pneumoniae (strain ATCC 700721 / MGH 78578) protein is Lysophospholipid transporter LplT.